The chain runs to 145 residues: Phospholipase A2 (145 aa).

An N-terminal signal peptide occupies residues 1–15 (MRLLVLAALLTVGAG). Q16 is subject to Pyrrolidone carboxylic acid. The propeptide at 16-22 (QAGLNSR) is removed by trypsin. 7 disulfide bridges follow: C33–C99, C49–C145, C51–C67, C66–C127, C73–C120, C83–C113, and C106–C118. Y50, G52, and G54 together coordinate Ca(2+). H70 is a catalytic residue. D71 contributes to the Ca(2+) binding site. The active site involves D121.

The protein belongs to the phospholipase A2 family. Monomer or homodimer. Ca(2+) serves as cofactor. In terms of processing, activated by trypsin cleavage in the duodenum. Can also be activated by thrombin or autocatalytically.

Its subcellular location is the secreted. The catalysed reaction is a 1,2-diacyl-sn-glycero-3-phosphocholine + H2O = a 1-acyl-sn-glycero-3-phosphocholine + a fatty acid + H(+). It carries out the reaction 1,2-ditetradecanoyl-sn-glycero-3-phosphocholine + H2O = 1-tetradecanoyl-sn-glycero-3-phosphocholine + tetradecanoate + H(+). It catalyses the reaction 1,2-dihexadecanoyl-sn-glycero-3-phosphocholine + H2O = 1-hexadecanoyl-sn-glycero-3-phosphocholine + hexadecanoate + H(+). The enzyme catalyses 1-hexadecanoyl-2-(9Z-octadecenoyl)-sn-glycero-3-phosphocholine + H2O = 1-hexadecanoyl-sn-glycero-3-phosphocholine + (9Z)-octadecenoate + H(+). The catalysed reaction is 1-hexadecanoyl-2-(5Z,8Z,11Z,14Z-eicosatetraenoyl)-sn-glycero-3-phosphocholine + H2O = 1-hexadecanoyl-sn-glycero-3-phosphocholine + (5Z,8Z,11Z,14Z)-eicosatetraenoate + H(+). It carries out the reaction 1-hexadecanoyl-2-(9Z-octadecenoyl)-sn-glycero-3-phospho-(1'-sn-glycerol) + H2O = 1-hexadecanoyl-sn-glycero-3-phospho-(1'-sn-glycerol) + (9Z)-octadecenoate + H(+). It catalyses the reaction N-hexadecanoyl-1,2-di-(9Z-octadecenoyl)-sn-glycero-3-phosphoethanolamine + H2O = N-hexadecanoyl-1-(9Z-octadecenoyl)-sn-glycero-3-phosphoethanolamine + (9Z)-octadecenoate + H(+). The enzyme catalyses 1-hexadecanoyl-2-(9Z,12Z-octadecadienoyl)-sn-glycero-3-phosphoethanolamine + H2O = 1-hexadecanoyl-sn-glycero-3-phosphoethanolamine + (9Z,12Z)-octadecadienoate + H(+). The catalysed reaction is N,1-dihexadecanoyl-2-(9Z,12Z-octadecadienoyl)-sn-glycero-3-phosphoethanolamine + H2O = N,1-dihexadecanoyl-sn-glycero-3-phosphoethanolamine + (9Z,12Z)-octadecadienoate + H(+). Its function is as follows. Secretory calcium-dependent phospholipase A2 that primarily targets dietary phospholipids in the intestinal tract. Hydrolyzes the ester bond of the fatty acyl group attached at sn-2 position of phospholipids (phospholipase A2 activity) with preference for phosphatidylethanolamines and phosphatidylglycerols over phosphatidylcholines. May play a role in the biosynthesis of N-acyl ethanolamines that regulate energy metabolism and inflammation in the intestinal tract. Hydrolyzes N-acyl phosphatidylethanolamines to N-acyl lysophosphatidylethanolamines, which are further cleaved by a lysophospholipase D to release N-acyl ethanolamines. May act in an autocrine and paracrine manner. Has anti-helminth activity in a process regulated by gut microbiota. Upon helminth infection of intestinal epithelia, directly affects phosphatidylethanolamine contents in the membrane of helminth larvae, likely controlling an array of phospholipid-mediated cellular processes such as membrane fusion and cell division while providing for better immune recognition, ultimately reducing larvae integrity and infectivity. This is Phospholipase A2 (PLA2G1B) from Bos taurus (Bovine).